We begin with the raw amino-acid sequence, 439 residues long: Zinc finger MYND domain-containing protein 10 (439 aa).

Cys385, Cys388, Cys396, Cys399, Cys405, Cys409, His417, and Cys421 together coordinate Zn(2+). Residues 385–421 form an MYND-type zinc finger; sequence CGSCGSEASKRCSRCQSEWYCKRECQVKHWQKHKKAC.

The protein belongs to the ZMYND10 family. Interacts with LRRC6.

It localises to the cytoplasm. It is found in the cytoskeleton. Its subcellular location is the cilium basal body. The protein localises to the microtubule organizing center. The protein resides in the centrosome. It localises to the centriolar satellite. It is found in the apical cell membrane. Its subcellular location is the dynein axonemal particle. Plays a role in axonemal structure organization and motility. Involved in axonemal pre-assembly of inner and outer dynein arms (IDA and ODA, respectively) for proper axoneme building for cilia motility. May act by indirectly regulating transcription of dynein proteins. In Xenopus laevis (African clawed frog), this protein is Zinc finger MYND domain-containing protein 10 (zmynd10).